The sequence spans 876 residues: DNA mismatch repair protein MutS (876 aa).

628–635 (GPNMAGKS) provides a ligand contact to ATP.

It belongs to the DNA mismatch repair MutS family.

Its function is as follows. This protein is involved in the repair of mismatches in DNA. It is possible that it carries out the mismatch recognition step. This protein has a weak ATPase activity. The sequence is that of DNA mismatch repair protein MutS from Chlorobaculum parvum (strain DSM 263 / NCIMB 8327) (Chlorobium vibrioforme subsp. thiosulfatophilum).